Here is a 686-residue protein sequence, read N- to C-terminus: NADH-ubiquinone oxidoreductase chain 5 (686 aa).

17 consecutive transmembrane segments (helical) span residues 3 to 23, 40 to 60, 101 to 121, 139 to 159, 160 to 180, 198 to 218, 222 to 242, 261 to 281, 293 to 313, 321 to 341, 350 to 370, 382 to 402, 432 to 452, 472 to 492, 526 to 546, 635 to 655, and 665 to 685; these read LIIL…GRFV, ALLS…LFSF, ITLP…LFSV, LFTF…LFVG, WEGI…RIQA, LSIA…STVF, AYIN…GAMA, TPVS…YLLI, VLLV…TCGL, IIAF…GLSQ, LFHA…IHAF, LINF…SLLA, ILGS…ISLV, ITVI…GYVT, LIFK…ALYL, ALYI…PMLV, and LIIL…KKLS.

It belongs to the complex I subunit 5 family.

It is found in the mitochondrion inner membrane. It carries out the reaction a ubiquinone + NADH + 5 H(+)(in) = a ubiquinol + NAD(+) + 4 H(+)(out). Functionally, core subunit of the mitochondrial membrane respiratory chain NADH dehydrogenase (Complex I) that is believed to belong to the minimal assembly required for catalysis. Complex I functions in the transfer of electrons from NADH to the respiratory chain. The immediate electron acceptor for the enzyme is believed to be ubiquinone. This is NADH-ubiquinone oxidoreductase chain 5 (ND5) from Schizophyllum commune (Split gill fungus).